The sequence spans 295 residues: Ribosomal RNA small subunit methyltransferase A (295 aa).

S-adenosyl-L-methionine-binding residues include asparagine 29, leucine 31, glycine 56, glutamate 77, aspartate 102, and asparagine 128.

Belongs to the class I-like SAM-binding methyltransferase superfamily. rRNA adenine N(6)-methyltransferase family. RsmA subfamily.

It is found in the cytoplasm. It catalyses the reaction adenosine(1518)/adenosine(1519) in 16S rRNA + 4 S-adenosyl-L-methionine = N(6)-dimethyladenosine(1518)/N(6)-dimethyladenosine(1519) in 16S rRNA + 4 S-adenosyl-L-homocysteine + 4 H(+). Specifically dimethylates two adjacent adenosines (A1518 and A1519) in the loop of a conserved hairpin near the 3'-end of 16S rRNA in the 30S particle. May play a critical role in biogenesis of 30S subunits. In Listeria monocytogenes serovar 1/2a (strain ATCC BAA-679 / EGD-e), this protein is Ribosomal RNA small subunit methyltransferase A.